Consider the following 437-residue polypeptide: O-acetyl-L-homoserine sulfhydrylase (437 aa).

An N6-(pyridoxal phosphate)lysine modification is found at lysine 216.

The protein belongs to the trans-sulfuration enzymes family. Homohexamer. The cofactor is pyridoxal 5'-phosphate.

It catalyses the reaction O-acetyl-L-homoserine + hydrogen sulfide = L-homocysteine + acetate. It carries out the reaction O-acetyl-L-homoserine + methanethiol = L-methionine + acetate + H(+). It participates in amino-acid biosynthesis; L-methionine biosynthesis via de novo pathway; L-homocysteine from O-acetyl-L-homoserine: step 1/1. Its activity is regulated as follows. Inhibited by methionine and cystathionine. Its function is as follows. Catalyzes the conversion of O-acetyl-L-homoserine (OAH) into homocysteine in the methionine biosynthesis pathway. Can also use dimethyldisulfide and methanethiol as reduced sulfur sources, leading to the direct formation of methionine. Has weak cystathionine gamma-synthase activity. This is O-acetyl-L-homoserine sulfhydrylase from Corynebacterium glutamicum (strain ATCC 13032 / DSM 20300 / JCM 1318 / BCRC 11384 / CCUG 27702 / LMG 3730 / NBRC 12168 / NCIMB 10025 / NRRL B-2784 / 534).